Reading from the N-terminus, the 260-residue chain is MEMKKKINMELKNRAPEEVTELVLDNCLCVNGEIEGLNDTFKELEFLSMANVELSSLARLPSLNKLRKLELSDNIISGGLEVLAEKCPNLTYLNLSGNKIKDLSTVEALQNLKNLKSLDLFNCEITNLEDYRESIFELLQQITYLDGFDQEDNEAPDSEEEDDDDEDGDEDEEDEDEDEAGPPEGYEEEEDDDEDEAGSEVGEGEEEVGLSYLMKDEIQDEEDDDDYVDEGEEEEEEEEEGLRGEKRKRDAEDDGEEDDD.

Methionine 1 is modified (N-acetylmethionine). LRR repeat units lie at residues 18–38 (EVTELVLDNCLCVNGEIEGLN), 43–64 (ELEFLSMANVELSSLARLPSLN), 65–87 (KLRKLELSDNIISGGLEVLAEKC), and 89–110 (NLTYLNLSGNKIKDLSTVEALQ). Residue lysine 68 forms a Glycyl lysine isopeptide (Lys-Gly) (interchain with G-Cter in SUMO2) linkage. Residues 123-161 (CEITNLEDYRESIFELLQQITYLDGFDQEDNEAPDSEEE) enclose the LRRCT domain. Acidic residues-rich tracts occupy residues 149–208 (DQED…EEEV) and 218–240 (IQDEEDDDDYVDEGEEEEEEEEE). The segment at 149 to 260 (DQEDNEAPDS…AEDDGEEDDD (112 aa)) is disordered. The ZID domain stretch occupies residues 207–260 (EVGLSYLMKDEIQDEEDDDDYVDEGEEEEEEEEEGLRGEKRKRDAEDDGEEDDD). Over residues 241–251 (GLRGEKRKRDA) the composition is skewed to basic and acidic residues.

It belongs to the ANP32 family. Component of a SWR1-like complex, composed of EP400, KAT5/TIP60, TRRAP, BRD8, RUVBL1, RUVBL2, ING3 and ANP32E; the complex does not contain SRCAP. Interacts with H2A.Z/H2AZ1. Interacts with the importin alpha KPNA1 and KPNA2. Post-translationally, phosphorylated. The phosphorylation is nuclear localization signal (NLS)-dependent. In terms of tissue distribution, expressed at highest levels in cerebellum and spleen. In the cerebellum, expressed mainly in granule cells and, to a lesser extent, in Purkinje cells.

It localises to the cytoplasm. Its subcellular location is the nucleus. Its function is as follows. Histone chaperone that specifically mediates the genome-wide removal of histone H2A.Z/H2AZ1 from the nucleosome: removes H2A.Z/H2AZ1 from its normal sites of deposition, especially from enhancer and insulator regions. Not involved in deposition of H2A.Z/H2AZ1 in the nucleosome. May stabilize the evicted H2A.Z/H2AZ1-H2B dimer, thus shifting the equilibrium towards dissociation and the off-chromatin state. Inhibits activity of protein phosphatase 2A (PP2A). Does not inhibit protein phosphatase 1. May play a role in cerebellar development and synaptogenesis. The sequence is that of Acidic leucine-rich nuclear phosphoprotein 32 family member E (Anp32e) from Mus musculus (Mouse).